The sequence spans 390 residues: Altered inheritance of mitochondria protein 6 (390 aa).

A signal peptide spans 1–17 (MLGLKGCLTILIGYVIA).

It belongs to the AIM6 family.

The protein is Altered inheritance of mitochondria protein 6 of Saccharomyces cerevisiae (strain ATCC 204508 / S288c) (Baker's yeast).